The primary structure comprises 1377 residues: ATP-dependent helicase/nuclease subunit A (1377 aa).

A UvrD-like helicase ATP-binding domain is found at 4-478; that stretch reads TSWTPGQQKV…IDLSKNFRSR (475 aa). 25–32 is an ATP binding site; it reads AAAGSGKT. The region spanning 526–867 is the UvrD-like helicase C-terminal domain; the sequence is FLFSDTKTEL…RIMSIHKSKG (342 aa). Positions 1036–1065 are enriched in acidic residues; it reads FEEESDEQSDEERSDEERSDGEQSDGEQSD. Positions 1036–1072 are disordered; it reads FEEESDEQSDEERSDEERSDGEQSDGEQSDGEQPRKD.

This sequence belongs to the helicase family. AddA subfamily. Heterodimer of AddA and AddB/RexB. It depends on Mg(2+) as a cofactor.

It carries out the reaction Couples ATP hydrolysis with the unwinding of duplex DNA by translocating in the 3'-5' direction.. The catalysed reaction is ATP + H2O = ADP + phosphate + H(+). In terms of biological role, the heterodimer acts as both an ATP-dependent DNA helicase and an ATP-dependent, dual-direction single-stranded exonuclease. Recognizes the chi site generating a DNA molecule suitable for the initiation of homologous recombination. The AddA nuclease domain is required for chi fragment generation; this subunit has the helicase and 3' -&gt; 5' nuclease activities. This is ATP-dependent helicase/nuclease subunit A from Lachnoclostridium phytofermentans (strain ATCC 700394 / DSM 18823 / ISDg) (Clostridium phytofermentans).